Reading from the N-terminus, the 404-residue chain is Propionate kinase (404 aa).

Belongs to the acetokinase family. PduW subfamily.

The protein resides in the cytoplasm. It carries out the reaction propanoate + ATP = propanoyl phosphate + ADP. The protein operates within polyol metabolism; 1,2-propanediol degradation. In terms of biological role, works with phosphate acetyltransferase (pta) to capture exogenous propionate and regenerate propionyl-CoA during degradation of 1,2-propanediol (1,2-PD). This is Propionate kinase from Klebsiella pneumoniae subsp. pneumoniae (strain ATCC 700721 / MGH 78578).